The primary structure comprises 50 residues: uncharacterized protein (50 aa).

It is found in the mitochondrion. This is an uncharacterized protein from Saccharomyces cerevisiae (strain ATCC 204508 / S288c) (Baker's yeast).